We begin with the raw amino-acid sequence, 297 residues long: Putative thiosulfate sulfurtransferase SseA (297 aa).

2 consecutive Rhodanese domains span residues 31-138 and 168-286; these read GAPG…ETTL and ILDA…VPIV. C245 (cysteine persulfide intermediate) is an active-site residue. R250 serves as a coordination point for substrate.

It carries out the reaction thiosulfate + hydrogen cyanide = thiocyanate + sulfite + 2 H(+). In Mycobacterium bovis (strain ATCC BAA-935 / AF2122/97), this protein is Putative thiosulfate sulfurtransferase SseA (sseA).